Consider the following 641-residue polypeptide: Probable ATP-dependent helicase YpvA (641 aa).

Residues 29–303 (YDILPEKGFD…EFAELIEDAL (275 aa)) form the Helicase ATP-binding domain. 64–71 (AGVGTGKT) is an ATP binding site. 4 residues coordinate [4Fe-4S] cluster: cysteine 133, cysteine 197, cysteine 200, and cysteine 206. A DEGH box motif is present at residues 257–260 (DEGH).

It belongs to the helicase family. DinG subfamily. Requires [4Fe-4S] cluster as cofactor.

It carries out the reaction Couples ATP hydrolysis with the unwinding of duplex DNA at the replication fork by translocating in the 5'-3' direction. This creates two antiparallel DNA single strands (ssDNA). The leading ssDNA polymer is the template for DNA polymerase III holoenzyme which synthesizes a continuous strand.. The catalysed reaction is ATP + H2O = ADP + phosphate + H(+). In terms of biological role, might be a 5'-3' DNA helicase. The polypeptide is Probable ATP-dependent helicase YpvA (ypvA) (Bacillus subtilis (strain 168)).